We begin with the raw amino-acid sequence, 342 residues long: Methylthioribose-1-phosphate isomerase (342 aa).

Residues 49-51, Arg86, and Gln187 contribute to the substrate site; that span reads RGA. Asp228 serves as the catalytic Proton donor. Residue 238–239 participates in substrate binding; that stretch reads NK.

The protein belongs to the eIF-2B alpha/beta/delta subunits family. MtnA subfamily.

It catalyses the reaction 5-(methylsulfanyl)-alpha-D-ribose 1-phosphate = 5-(methylsulfanyl)-D-ribulose 1-phosphate. It functions in the pathway amino-acid biosynthesis; L-methionine biosynthesis via salvage pathway; L-methionine from S-methyl-5-thio-alpha-D-ribose 1-phosphate: step 1/6. Its function is as follows. Catalyzes the interconversion of methylthioribose-1-phosphate (MTR-1-P) into methylthioribulose-1-phosphate (MTRu-1-P). The sequence is that of Methylthioribose-1-phosphate isomerase from Enterobacter sp. (strain 638).